Reading from the N-terminus, the 45-residue chain is Gene 78 protein (45 aa).

Positions 1 to 14 are enriched in basic and acidic residues; that stretch reads MKKMSDQLKARLEL. The interval 1-45 is disordered; that stretch reads MKKMSDQLKARLELRLSNAAQPHRNRKREMKRPGKGNRNNWKKEY. The segment covering 23–35 has biased composition (basic residues); it reads HRNRKREMKRPGK.

This is Gene 78 protein (78) from Mycobacterium phage L5 (Mycobacteriophage L5).